Here is a 155-residue protein sequence, read N- to C-terminus: Large ribosomal subunit protein uL22 (155 aa).

It belongs to the universal ribosomal protein uL22 family. As to quaternary structure, part of the 50S ribosomal subunit.

Functionally, this protein binds specifically to 23S rRNA. It makes multiple contacts with different domains of the 23S rRNA in the assembled 50S subunit and ribosome. In terms of biological role, the globular domain of the protein is located near the polypeptide exit tunnel on the outside of the subunit, while an extended beta-hairpin is found that lines the wall of the exit tunnel in the center of the 70S ribosome. The chain is Large ribosomal subunit protein uL22 from Pyrococcus horikoshii (strain ATCC 700860 / DSM 12428 / JCM 9974 / NBRC 100139 / OT-3).